The following is a 513-amino-acid chain: Bifunctional purine biosynthesis protein PurH (513 aa).

One can recognise an MGS-like domain in the interval 1-144 (MKRALISVSD…KNYQDVTVVT (144 aa)).

It belongs to the PurH family.

It catalyses the reaction (6R)-10-formyltetrahydrofolate + 5-amino-1-(5-phospho-beta-D-ribosyl)imidazole-4-carboxamide = 5-formamido-1-(5-phospho-D-ribosyl)imidazole-4-carboxamide + (6S)-5,6,7,8-tetrahydrofolate. It carries out the reaction IMP + H2O = 5-formamido-1-(5-phospho-D-ribosyl)imidazole-4-carboxamide. It functions in the pathway purine metabolism; IMP biosynthesis via de novo pathway; 5-formamido-1-(5-phospho-D-ribosyl)imidazole-4-carboxamide from 5-amino-1-(5-phospho-D-ribosyl)imidazole-4-carboxamide (10-formyl THF route): step 1/1. The protein operates within purine metabolism; IMP biosynthesis via de novo pathway; IMP from 5-formamido-1-(5-phospho-D-ribosyl)imidazole-4-carboxamide: step 1/1. In Lactobacillus acidophilus (strain ATCC 700396 / NCK56 / N2 / NCFM), this protein is Bifunctional purine biosynthesis protein PurH.